A 241-amino-acid polypeptide reads, in one-letter code: VKSTNLMAFVATKMLERQEDLDTCTEMQVEKMKTSTKARLRTESSFAPRTWEDAIKDGELLFNGTILQAESPTMTPASVEMKGKKFPIDFAPSNIAPIGQNPIYLSPCIPNFDGNVWEATMYHHRGATLTKTMNCNCFQRTIWCHPNPSRMRLSYAFVLYCRNTKKICGYLIARQVAGIETGIRKCFRCIKSGFVMATDEISLTILQSIKSGAQLDPYWGNETPDIDKTEAYMLSLREAGP.

It localises to the host cytoplasm. It is found in the host nucleus. Its function is as follows. Suppresses the RNA silencing-based antiviral response in Drosophila cells. The sequence is that of Non-structural protein 1 (NS) from Influenza C virus (strain C/Johannesburg/1/1966).